The following is a 148-amino-acid chain: UPF0260 protein PM0539 (148 aa).

It belongs to the UPF0260 family.

The sequence is that of UPF0260 protein PM0539 from Pasteurella multocida (strain Pm70).